Consider the following 316-residue polypeptide: Apolipoprotein E (316 aa).

Positions 1 to 18 are cleaved as a signal peptide; it reads MKALWAVLVVTLLAGCLA. A run of 8 repeats spans residues 76 to 97, 98 to 119, 120 to 141, 142 to 163, 164 to 185, 186 to 207, 208 to 229, and 230 to 251. Residues 76 to 251 form an 8 X 22 AA approximate tandem repeats region; it reads VLMEDTMTEL…RLEEMREQME (176 aa). Met139 is subject to Methionine sulfoxide. Ser143 carries the phosphoserine modification. Residues 154–164 form an LDL and other lipoprotein receptors binding region; sequence HLRKLRKRLMR. A heparin-binding site is contributed by 158–161; sequence LRKR. Residues 206-286 are lipid-binding and lipoprotein association; that stretch reads TANLGAGAGK…GWFEPLVEDM (81 aa). Residue 225 to 232 coordinates heparin; it reads GARIRGRL. A homooligomerization region spans residues 262 to 316; that stretch reads QQMRLQAEIFQARLKGWFEPLVEDMQRQWANLVEKIQASVAANPIPPSSVPQESP. Positions 274–286 are specificity for association with VLDL; sequence RLKGWFEPLVEDM.

This sequence belongs to the apolipoprotein A1/A4/E family. In terms of assembly, homotetramer. May interact with ABCA1; functionally associated with ABCA1 in the biogenesis of HDLs. May interact with APP/A4 amyloid-beta peptide; the interaction is extremely stable in vitro but its physiological significance is unclear. May interact with MAPT. May interact with MAP2. In the cerebrospinal fluid, interacts with secreted SORL1. Interacts with PMEL; this allows the loading of PMEL luminal fragment on ILVs to induce fibril nucleation. Post-translationally, APOE exists as multiple glycosylated and sialylated glycoforms within cells and in plasma. The extent of glycosylation and sialylation are tissue and context specific. Glycated in plasma VLDL. In terms of processing, phosphorylated by FAM20C in the extracellular medium.

It is found in the secreted. The protein resides in the extracellular space. Its subcellular location is the extracellular matrix. It localises to the extracellular vesicle. The protein localises to the endosome. It is found in the multivesicular body. APOE is an apolipoprotein, a protein associating with lipid particles, that mainly functions in lipoprotein-mediated lipid transport between organs via the plasma and interstitial fluids. APOE is a core component of plasma lipoproteins and is involved in their production, conversion and clearance. Apolipoproteins are amphipathic molecules that interact both with lipids of the lipoprotein particle core and the aqueous environment of the plasma. As such, APOE associates with chylomicrons, chylomicron remnants, very low density lipoproteins (VLDL) and intermediate density lipoproteins (IDL) but shows a preferential binding to high-density lipoproteins (HDL). It also binds a wide range of cellular receptors including the LDL receptor/LDLR, the LDL receptor-related proteins LRP1, LRP2 and LRP8 and the very low-density lipoprotein receptor/VLDLR that mediate the cellular uptake of the APOE-containing lipoprotein particles. Finally, APOE also has a heparin-binding activity and binds heparan-sulfate proteoglycans on the surface of cells, a property that supports the capture and the receptor-mediated uptake of APOE-containing lipoproteins by cells. A main function of APOE is to mediate lipoprotein clearance through the uptake of chylomicrons, VLDLs, and HDLs by hepatocytes. APOE is also involved in the biosynthesis by the liver of VLDLs as well as their uptake by peripheral tissues ensuring the delivery of triglycerides and energy storage in muscle, heart and adipose tissues. By participating in the lipoprotein-mediated distribution of lipids among tissues, APOE plays a critical role in plasma and tissues lipid homeostasis. APOE is also involved in two steps of reverse cholesterol transport, the HDLs-mediated transport of cholesterol from peripheral tissues to the liver, and thereby plays an important role in cholesterol homeostasis. First, it is functionally associated with ABCA1 in the biogenesis of HDLs in tissues. Second, it is enriched in circulating HDLs and mediates their uptake by hepatocytes. APOE also plays an important role in lipid transport in the central nervous system, regulating neuron survival and sprouting. In Peromyscus leucopus (White-footed mouse), this protein is Apolipoprotein E (Apoe).